The primary structure comprises 248 residues: tRNA (guanine-N(1)-)-methyltransferase (248 aa).

Residues Gly-113 and 133 to 138 (IGDFVL) contribute to the S-adenosyl-L-methionine site.

Belongs to the RNA methyltransferase TrmD family. In terms of assembly, homodimer.

Its subcellular location is the cytoplasm. The enzyme catalyses guanosine(37) in tRNA + S-adenosyl-L-methionine = N(1)-methylguanosine(37) in tRNA + S-adenosyl-L-homocysteine + H(+). Specifically methylates guanosine-37 in various tRNAs. This is tRNA (guanine-N(1)-)-methyltransferase from Dehalococcoides mccartyi (strain ATCC BAA-2266 / KCTC 15142 / 195) (Dehalococcoides ethenogenes (strain 195)).